The primary structure comprises 96 residues: Co-chaperonin GroES (96 aa).

The protein belongs to the GroES chaperonin family. In terms of assembly, heptamer of 7 subunits arranged in a ring. Interacts with the chaperonin GroEL.

The protein localises to the cytoplasm. In terms of biological role, together with the chaperonin GroEL, plays an essential role in assisting protein folding. The GroEL-GroES system forms a nano-cage that allows encapsulation of the non-native substrate proteins and provides a physical environment optimized to promote and accelerate protein folding. GroES binds to the apical surface of the GroEL ring, thereby capping the opening of the GroEL channel. The chain is Co-chaperonin GroES from Coxiella burnetii (strain Dugway 5J108-111).